We begin with the raw amino-acid sequence, 460 residues long: tRNA (guanine(37)-N(1))-methyltransferase (460 aa).

Residues His-204, 243–244 (DL), 271–272 (DA), and Asn-292 contribute to the S-adenosyl-L-methionine site. The span at 390-428 (ASTTTTPTTSNTNTSTTTSTTSTSTTTTESTNTNNSANN) shows a compositional bias: low complexity. Residues 390-460 (ASTTTTPTTS…SIDTNKKLKN (71 aa)) form a disordered region. Residues 442-451 (DSNETNETDS) are compositionally biased toward acidic residues.

It belongs to the class I-like SAM-binding methyltransferase superfamily. TRM5/TYW2 family. Monomer.

It localises to the mitochondrion matrix. The protein resides in the nucleus. It is found in the cytoplasm. The catalysed reaction is guanosine(37) in tRNA + S-adenosyl-L-methionine = N(1)-methylguanosine(37) in tRNA + S-adenosyl-L-homocysteine + H(+). Its function is as follows. Specifically methylates the N1 position of guanosine-37 in various cytoplasmic and mitochondrial tRNAs. Methylation is not dependent on the nature of the nucleoside 5' of the target nucleoside. This is the first step in the biosynthesis of wybutosine (yW), a modified base adjacent to the anticodon of tRNAs and required for accurate decoding. The protein is tRNA (guanine(37)-N(1))-methyltransferase (trmt5) of Dictyostelium discoideum (Social amoeba).